The sequence spans 2662 residues: Centrosome-associated protein CEP250L1 (2662 aa).

2 coiled-coil regions span residues lysine 1030–glutamate 1248 and alanine 1281–glutamine 1719.

The protein resides in the cytoplasm. Its subcellular location is the cytoskeleton. It is found in the microtubule organizing center. It localises to the centrosome. Part of the centrosome inner core complex. Plays a role in the formation and/or stabilization of the mitotic spindle. Required for proper nuclear segregation and DNA partitioning during cell division. The sequence is that of Centrosome-associated protein CEP250L1 from Toxoplasma gondii (strain ATCC 50611 / Me49).